Consider the following 642-residue polypeptide: Capsid vertex component 2 (642 aa).

Positions 1-48 (MSLLHTFWRLPVAVFFEPHEENVLRCPERVLRRLLEDAAVTMRGGGWR) are interaction with major capsid protein/MCP. Residues 97-125 (DEGPSPRTLLQPPCRPRSSSPGTGVAGAS) are disordered.

This sequence belongs to the herpesviridae CVC2 protein family. Heterodimerizes with CVC1. Interacts with major capsid protein/MCP and triplex capsid protein 1/TRX1 at the pentamer vertices. Interacts with the large tegument protein/LTP.

Its subcellular location is the virion. The protein resides in the host nucleus. Its function is as follows. Capsid vertex-specific component that plays a role during viral DNA encapsidation, assuring correct genome cleavage and presumably stabilizing capsids that contain full-length viral genomes. Participates in the interaction between the capsid and the tegument through interaction with the large tegument protein/LTP. This Homo sapiens (Human) protein is Capsid vertex component 2.